We begin with the raw amino-acid sequence, 495 residues long: Nitrogen fixation regulatory protein (495 aa).

A PAS 1 domain is found at 23 to 93 (HPGLFFTMVE…QEMWQTLLQR (71 aa)). Positions 94 to 148 (QPWRGQLINQARDGGLYLVDIDITPVLNPQGELEHYLAMQRDISVSYTLEQRLRN) constitute a PAC domain. In terms of domain architecture, PAS 2; truncated spans 151 to 174 (TLMEAVLNNIPAAVVVVDEQDRVV).

It depends on FAD as a cofactor.

Its function is as follows. Required for the inhibition of NifA activity in response to oxygen and low level of fixed nitrogen. The sequence is that of Nitrogen fixation regulatory protein (nifL) from Klebsiella pneumoniae.